Here is a 366-residue protein sequence, read N- to C-terminus: Aminomethyltransferase (366 aa).

Belongs to the GcvT family. As to quaternary structure, the glycine cleavage system is composed of four proteins: P, T, L and H.

The catalysed reaction is N(6)-[(R)-S(8)-aminomethyldihydrolipoyl]-L-lysyl-[protein] + (6S)-5,6,7,8-tetrahydrofolate = N(6)-[(R)-dihydrolipoyl]-L-lysyl-[protein] + (6R)-5,10-methylene-5,6,7,8-tetrahydrofolate + NH4(+). Functionally, the glycine cleavage system catalyzes the degradation of glycine. The chain is Aminomethyltransferase from Bacillus cytotoxicus (strain DSM 22905 / CIP 110041 / 391-98 / NVH 391-98).